The primary structure comprises 148 residues: Transcriptional regulator MraZ (148 aa).

SpoVT-AbrB domains lie at 5–53 (ETAI…VEKE) and 82–125 (SALL…SEQA).

This sequence belongs to the MraZ family. Forms oligomers.

Its subcellular location is the cytoplasm. The protein localises to the nucleoid. In Xylella fastidiosa (strain Temecula1 / ATCC 700964), this protein is Transcriptional regulator MraZ.